Here is a 120-residue protein sequence, read N- to C-terminus: Aspartate 1-decarboxylase (120 aa).

Serine 25 functions as the Schiff-base intermediate with substrate; via pyruvic acid in the catalytic mechanism. The residue at position 25 (serine 25) is a Pyruvic acid (Ser). Substrate is bound at residue threonine 57. The active-site Proton donor is the tyrosine 58. 73–75 contacts substrate; the sequence is GAA.

This sequence belongs to the PanD family. In terms of assembly, heterooctamer of four alpha and four beta subunits. The cofactor is pyruvate. In terms of processing, is synthesized initially as an inactive proenzyme, which is activated by self-cleavage at a specific serine bond to produce a beta-subunit with a hydroxyl group at its C-terminus and an alpha-subunit with a pyruvoyl group at its N-terminus.

Its subcellular location is the cytoplasm. The enzyme catalyses L-aspartate + H(+) = beta-alanine + CO2. It functions in the pathway cofactor biosynthesis; (R)-pantothenate biosynthesis; beta-alanine from L-aspartate: step 1/1. Catalyzes the pyruvoyl-dependent decarboxylation of aspartate to produce beta-alanine. This is Aspartate 1-decarboxylase from Ralstonia nicotianae (strain ATCC BAA-1114 / GMI1000) (Ralstonia solanacearum).